Reading from the N-terminus, the 361-residue chain is Histidinol-phosphate aminotransferase (361 aa).

N6-(pyridoxal phosphate)lysine is present on Lys-221.

It belongs to the class-II pyridoxal-phosphate-dependent aminotransferase family. Histidinol-phosphate aminotransferase subfamily. Pyridoxal 5'-phosphate is required as a cofactor.

It carries out the reaction L-histidinol phosphate + 2-oxoglutarate = 3-(imidazol-4-yl)-2-oxopropyl phosphate + L-glutamate. Its pathway is amino-acid biosynthesis; L-histidine biosynthesis; L-histidine from 5-phospho-alpha-D-ribose 1-diphosphate: step 7/9. In Methanocella arvoryzae (strain DSM 22066 / NBRC 105507 / MRE50), this protein is Histidinol-phosphate aminotransferase.